Reading from the N-terminus, the 430-residue chain is 3-phosphoshikimate 1-carboxyvinyltransferase (430 aa).

Positions 25, 26, and 30 each coordinate 3-phosphoshikimate. K25 serves as a coordination point for phosphoenolpyruvate. 2 residues coordinate phosphoenolpyruvate: G98 and R126. 6 residues coordinate 3-phosphoshikimate: S169, S170, Q171, S198, E313, and H342. Phosphoenolpyruvate is bound at residue Q171. The Proton acceptor role is filled by E313. Phosphoenolpyruvate is bound by residues R346, R387, and K412.

This sequence belongs to the EPSP synthase family. As to quaternary structure, monomer.

The protein resides in the cytoplasm. It carries out the reaction 3-phosphoshikimate + phosphoenolpyruvate = 5-O-(1-carboxyvinyl)-3-phosphoshikimate + phosphate. The protein operates within metabolic intermediate biosynthesis; chorismate biosynthesis; chorismate from D-erythrose 4-phosphate and phosphoenolpyruvate: step 6/7. In terms of biological role, catalyzes the transfer of the enolpyruvyl moiety of phosphoenolpyruvate (PEP) to the 5-hydroxyl of shikimate-3-phosphate (S3P) to produce enolpyruvyl shikimate-3-phosphate and inorganic phosphate. This Mycobacterium leprae (strain TN) protein is 3-phosphoshikimate 1-carboxyvinyltransferase.